The chain runs to 509 residues: Maturase K (509 aa).

Belongs to the intron maturase 2 family. MatK subfamily.

Its subcellular location is the plastid. The protein resides in the chloroplast. In terms of biological role, usually encoded in the trnK tRNA gene intron. Probably assists in splicing its own and other chloroplast group II introns. This is Maturase K from Clematis vitalba (Evergreen clematis).